The chain runs to 102 residues: Small ribosomal subunit protein uS10 (102 aa).

Belongs to the universal ribosomal protein uS10 family. In terms of assembly, part of the 30S ribosomal subunit.

Its function is as follows. Involved in the binding of tRNA to the ribosomes. The polypeptide is Small ribosomal subunit protein uS10 (Bifidobacterium longum subsp. infantis (strain ATCC 15697 / DSM 20088 / JCM 1222 / NCTC 11817 / S12)).